Here is a 169-residue protein sequence, read N- to C-terminus: Putative phosphoesterase SACOL1020 (169 aa).

His34 serves as the catalytic Proton donor. 2 consecutive short sequence motifs (HXTX) follow at residues 34–37 (HVTI) and 115–118 (HFTI). The active-site Proton acceptor is the His115.

The protein belongs to the 2H phosphoesterase superfamily. YjcG family.

The polypeptide is Putative phosphoesterase SACOL1020 (Staphylococcus aureus (strain COL)).